The primary structure comprises 159 residues: Cyclic pyranopterin monophosphate synthase (159 aa).

Residues 75 to 77 and 113 to 114 each bind substrate; these read LCH and ME. D128 is an active-site residue.

The protein belongs to the MoaC family. As to quaternary structure, homohexamer; trimer of dimers.

It carries out the reaction (8S)-3',8-cyclo-7,8-dihydroguanosine 5'-triphosphate = cyclic pyranopterin phosphate + diphosphate. It participates in cofactor biosynthesis; molybdopterin biosynthesis. In terms of biological role, catalyzes the conversion of (8S)-3',8-cyclo-7,8-dihydroguanosine 5'-triphosphate to cyclic pyranopterin monophosphate (cPMP). The protein is Cyclic pyranopterin monophosphate synthase of Vibrio vulnificus (strain YJ016).